The sequence spans 174 residues: Small ribosomal subunit protein uS5c (174 aa).

The region spanning 17 to 80 (WEERVVQVKR…TDAKKHLVTV (64 aa)) is the S5 DRBM domain.

It belongs to the universal ribosomal protein uS5 family. In terms of assembly, part of the 30S ribosomal subunit. Contacts protein S4.

It is found in the plastid. The protein resides in the chloroplast. Functionally, with S4 and S12 plays an important role in translational accuracy. The chain is Small ribosomal subunit protein uS5c (rps5) from Porphyra purpurea (Red seaweed).